We begin with the raw amino-acid sequence, 617 residues long: Probable Xaa-Pro aminopeptidase P (617 aa).

Mn(2+)-binding residues include D414, D425, E523, and E537.

It belongs to the peptidase M24B family. The cofactor is Mn(2+).

The enzyme catalyses Release of any N-terminal amino acid, including proline, that is linked to proline, even from a dipeptide or tripeptide.. Its function is as follows. Catalyzes the removal of a penultimate prolyl residue from the N-termini of peptides. This is Probable Xaa-Pro aminopeptidase P (AMPP) from Ajellomyces capsulatus (strain G186AR / H82 / ATCC MYA-2454 / RMSCC 2432) (Darling's disease fungus).